A 95-amino-acid polypeptide reads, in one-letter code: Aspartyl/glutamyl-tRNA(Asn/Gln) amidotransferase subunit C (95 aa).

It belongs to the GatC family. As to quaternary structure, heterotrimer of A, B and C subunits.

The catalysed reaction is L-glutamyl-tRNA(Gln) + L-glutamine + ATP + H2O = L-glutaminyl-tRNA(Gln) + L-glutamate + ADP + phosphate + H(+). It catalyses the reaction L-aspartyl-tRNA(Asn) + L-glutamine + ATP + H2O = L-asparaginyl-tRNA(Asn) + L-glutamate + ADP + phosphate + 2 H(+). Its function is as follows. Allows the formation of correctly charged Asn-tRNA(Asn) or Gln-tRNA(Gln) through the transamidation of misacylated Asp-tRNA(Asn) or Glu-tRNA(Gln) in organisms which lack either or both of asparaginyl-tRNA or glutaminyl-tRNA synthetases. The reaction takes place in the presence of glutamine and ATP through an activated phospho-Asp-tRNA(Asn) or phospho-Glu-tRNA(Gln). The polypeptide is Aspartyl/glutamyl-tRNA(Asn/Gln) amidotransferase subunit C (Thermoanaerobacter pseudethanolicus (strain ATCC 33223 / 39E) (Clostridium thermohydrosulfuricum)).